A 132-amino-acid polypeptide reads, in one-letter code: Small ribosomal subunit protein uS8c (132 aa).

It belongs to the universal ribosomal protein uS8 family. In terms of assembly, part of the 30S ribosomal subunit.

It localises to the plastid. The protein resides in the chloroplast. In terms of biological role, one of the primary rRNA binding proteins, it binds directly to 16S rRNA central domain where it helps coordinate assembly of the platform of the 30S subunit. The polypeptide is Small ribosomal subunit protein uS8c (rps8) (Acorus calamus (Sweet flag)).